Here is a 969-residue protein sequence, read N- to C-terminus: Lateral signaling target protein 2 homolog (969 aa).

Residue Lys87 forms a Glycyl lysine isopeptide (Lys-Gly) (interchain with G-Cter in ubiquitin) linkage. Disordered stretches follow at residues 290 to 323 (QDGE…GVEE), 336 to 360 (SVWK…EEPI), 390 to 437 (STLL…YHDD), and 715 to 777 (RSEC…DMSE). Residues 295 to 310 (PTSSTNDPSASTGPDS) are compositionally biased toward polar residues. The span at 336–346 (SVWKEEEEKQV) shows a compositional bias: basic and acidic residues. Residues 391–402 (TLLSPPSQNQSP) show a composition bias toward polar residues. Over residues 411 to 423 (GSSLEGSSATSST) the composition is skewed to low complexity. A compositionally biased stretch (basic and acidic residues) spans 715–729 (RSECFGKQSKDDNRK). 2 stretches are compositionally biased toward low complexity: residues 732–745 (SSSQ…VPSS) and 756–769 (SLSS…VSSL). The segment at 899-959 (DEACNSCIAC…VCTHCYMFHV (61 aa)) adopts an FYVE-type zinc-finger fold. Zn(2+) is bound by residues Cys905, Cys908, Cys921, Cys924, Cys929, Cys932, Cys951, and Cys954.

It belongs to the lst-2 family. Monoubiquitination at Lys-87 prevents binding to phosphatidylinositol 3-phosphate (PI3P) and localization to early endosome membranes.

It is found in the cytoplasm. Its subcellular location is the cytosol. The protein resides in the early endosome membrane. Its function is as follows. Negative regulator of epidermal growth factor receptor (EGFR) signaling. Acts by promoting EGFR degradation in endosomes when not monoubiquitinated. This chain is Lateral signaling target protein 2 homolog (zfyve28), found in Danio rerio (Zebrafish).